The sequence spans 125 residues: Large ribosomal subunit protein bL21 (125 aa).

This sequence belongs to the bacterial ribosomal protein bL21 family. Part of the 50S ribosomal subunit. Contacts protein L20.

In terms of biological role, this protein binds to 23S rRNA in the presence of protein L20. The chain is Large ribosomal subunit protein bL21 from Synechococcus sp. (strain CC9311).